Here is a 294-residue protein sequence, read N- to C-terminus: Ribosomal protein L11 methyltransferase (294 aa).

4 residues coordinate S-adenosyl-L-methionine: Thr-145, Gly-166, Asp-188, and Asn-230.

It belongs to the methyltransferase superfamily. PrmA family.

It localises to the cytoplasm. The catalysed reaction is L-lysyl-[protein] + 3 S-adenosyl-L-methionine = N(6),N(6),N(6)-trimethyl-L-lysyl-[protein] + 3 S-adenosyl-L-homocysteine + 3 H(+). Methylates ribosomal protein L11. This Glaesserella parasuis serovar 5 (strain SH0165) (Haemophilus parasuis) protein is Ribosomal protein L11 methyltransferase.